The chain runs to 452 residues: Keratin, type II cytoskeletal 80 (452 aa).

The tract at residues 1-82 (MAYRSCVVGF…DPAVQQQKNQ (82 aa)) is head. The residue at position 45 (serine 45) is a Phosphoserine. The segment at 82 to 118 (QEKEEMKALNDKFASLIGKVQALEQRNQLLETRWSFL) is coil 1A. Residues 83-394 (EKEEMKALND…KLMEGEESRM (312 aa)) enclose the IF rod domain. Residues 119 to 135 (QGQGSATFDLSHHYETF) form a linker 1 region. A coil 1B region spans residues 136-227 (QGRLQEELRK…TVYEQELKDL (92 aa)). The interval 228 to 251 (TAQVKDVSVTVGLDSRCHIDLSGI) is linker 12. The interval 252 to 390 (VEEVKAQYDA…ATYHKLMEGE (139 aa)) is coil 2. Residues 391-452 (ESRMDLPSAT…YLSQESEASE (62 aa)) are tail. Positions 412-452 (TASKSGLTKTSSRKKKNRRGPVIKITEMSEKYLSQESEASE) are disordered. A compositionally biased stretch (basic residues) spans 422–432 (SSRKKKNRRGP). Positions 443–452 (YLSQESEASE) are enriched in polar residues.

Belongs to the intermediate filament family. Heterotetramer of two type I and two type II keratins.

The polypeptide is Keratin, type II cytoskeletal 80 (Krt80) (Mus musculus (Mouse)).